A 212-amino-acid polypeptide reads, in one-letter code: MEEDFFKLILITDRQNIPMEEYLDFVSACVQSGVTAVQLREKGLSHRELLSFGGALKSILDPLDIPLIVSDSVSVCLDLDASGVHLGQTDGDVIEARELLGPDKIIGWNVHTLDQLLNANTLPIDYLGLSALFATENKPEATDLWGFSGLEQAVSLCEHPIVAVGGIDESNAGNVVEAGAAGIAAIGAFHSAHNPGLATKALREIVDRGLRC.

38-42 (QLREK) is a binding site for 4-amino-2-methyl-5-(diphosphooxymethyl)pyrimidine. Residues Asp71 and Asp90 each coordinate Mg(2+). Residue Lys138 coordinates 4-amino-2-methyl-5-(diphosphooxymethyl)pyrimidine. Gly166 is a 2-[(2R,5Z)-2-carboxy-4-methylthiazol-5(2H)-ylidene]ethyl phosphate binding site.

The protein belongs to the thiamine-phosphate synthase family. The cofactor is Mg(2+).

The enzyme catalyses 2-[(2R,5Z)-2-carboxy-4-methylthiazol-5(2H)-ylidene]ethyl phosphate + 4-amino-2-methyl-5-(diphosphooxymethyl)pyrimidine + 2 H(+) = thiamine phosphate + CO2 + diphosphate. The catalysed reaction is 2-(2-carboxy-4-methylthiazol-5-yl)ethyl phosphate + 4-amino-2-methyl-5-(diphosphooxymethyl)pyrimidine + 2 H(+) = thiamine phosphate + CO2 + diphosphate. It catalyses the reaction 4-methyl-5-(2-phosphooxyethyl)-thiazole + 4-amino-2-methyl-5-(diphosphooxymethyl)pyrimidine + H(+) = thiamine phosphate + diphosphate. The protein operates within cofactor biosynthesis; thiamine diphosphate biosynthesis; thiamine phosphate from 4-amino-2-methyl-5-diphosphomethylpyrimidine and 4-methyl-5-(2-phosphoethyl)-thiazole: step 1/1. Functionally, condenses 4-methyl-5-(beta-hydroxyethyl)thiazole monophosphate (THZ-P) and 2-methyl-4-amino-5-hydroxymethyl pyrimidine pyrophosphate (HMP-PP) to form thiamine monophosphate (TMP). The sequence is that of Thiamine-phosphate synthase from Chlamydia caviae (strain ATCC VR-813 / DSM 19441 / 03DC25 / GPIC) (Chlamydophila caviae).